The primary structure comprises 398 residues: MPNPPRTAAIIVAAGRGLRAGAGGPKQYRTLAGRPVIARALQPFCTHPEVFAVQPVTNPDDTAIFNDAVTGLNFRPAVGGGATRQGSVRAGLEALAELNPDIVLIHDAARPFVTPDLISRAIVAAGQTGAALPVVAINDTVKQINAEGCVEATPDRARLRIAQTPQAFRFDVILDAHRRAARDGRDDFTDDAAIAEWAGLTVSTFEGDAANMKLTTPDDFIREESRLTALLGDIRTGTGYDVHAFGDGDHVWLCGLKVPHNRGFLAHSDGDVGLHALVDAILGALADGDIGSHFPPTDPQWKGAASDKFLKYAVERVAARGGRIANLEVTMICERPKIGPLREAMRARIAEITGLPVSRIAVKATTSERLGFTGREEGIAATASATIRLPWGAEGLAG.

The interval 1 to 234 is 2-C-methyl-D-erythritol 4-phosphate cytidylyltransferase; it reads MPNPPRTAAI…SRLTALLGDI (234 aa). The 2-C-methyl-D-erythritol 2,4-cyclodiphosphate synthase stretch occupies residues 235–398; it reads RTGTGYDVHA…LPWGAEGLAG (164 aa). A divalent metal cation contacts are provided by aspartate 241 and histidine 243. Residues 241 to 243 and 267 to 268 each bind 4-CDP-2-C-methyl-D-erythritol 2-phosphate; these read DVH and HS. Histidine 275 provides a ligand contact to a divalent metal cation. Residues 289–291, 365–368, phenylalanine 372, and arginine 375 each bind 4-CDP-2-C-methyl-D-erythritol 2-phosphate; these read DIG and TTSE.

It in the N-terminal section; belongs to the IspD/TarI cytidylyltransferase family. IspD subfamily. The protein in the C-terminal section; belongs to the IspF family. It depends on a divalent metal cation as a cofactor.

The catalysed reaction is 2-C-methyl-D-erythritol 4-phosphate + CTP + H(+) = 4-CDP-2-C-methyl-D-erythritol + diphosphate. The enzyme catalyses 4-CDP-2-C-methyl-D-erythritol 2-phosphate = 2-C-methyl-D-erythritol 2,4-cyclic diphosphate + CMP. It participates in isoprenoid biosynthesis; isopentenyl diphosphate biosynthesis via DXP pathway; isopentenyl diphosphate from 1-deoxy-D-xylulose 5-phosphate: step 2/6. Its pathway is isoprenoid biosynthesis; isopentenyl diphosphate biosynthesis via DXP pathway; isopentenyl diphosphate from 1-deoxy-D-xylulose 5-phosphate: step 4/6. In terms of biological role, bifunctional enzyme that catalyzes the formation of 4-diphosphocytidyl-2-C-methyl-D-erythritol from CTP and 2-C-methyl-D-erythritol 4-phosphate (MEP) (IspD), and catalyzes the conversion of 4-diphosphocytidyl-2-C-methyl-D-erythritol 2-phosphate (CDP-ME2P) to 2-C-methyl-D-erythritol 2,4-cyclodiphosphate (ME-CPP) with a corresponding release of cytidine 5-monophosphate (CMP) (IspF). In Rhodopseudomonas palustris (strain BisB5), this protein is Bifunctional enzyme IspD/IspF.